We begin with the raw amino-acid sequence, 447 residues long: Probable glycine dehydrogenase (decarboxylating) subunit 1 (447 aa).

Belongs to the GcvP family. N-terminal subunit subfamily. The glycine cleavage system is composed of four proteins: P, T, L and H. In this organism, the P 'protein' is a heterodimer of two subunits.

It catalyses the reaction N(6)-[(R)-lipoyl]-L-lysyl-[glycine-cleavage complex H protein] + glycine + H(+) = N(6)-[(R)-S(8)-aminomethyldihydrolipoyl]-L-lysyl-[glycine-cleavage complex H protein] + CO2. Its function is as follows. The glycine cleavage system catalyzes the degradation of glycine. The P protein binds the alpha-amino group of glycine through its pyridoxal phosphate cofactor; CO(2) is released and the remaining methylamine moiety is then transferred to the lipoamide cofactor of the H protein. In Bacillus thuringiensis subsp. konkukian (strain 97-27), this protein is Probable glycine dehydrogenase (decarboxylating) subunit 1.